The following is a 494-amino-acid chain: Serine/arginine-rich splicing factor 4 (494 aa).

One can recognise an RRM 1 domain in the interval 2–72 (PRVYIGRLSY…ERVIVEHARG (71 aa)). 2 disordered regions span residues 72–95 (GPRR…GRDK) and 169–494 (KIRL…HSRS). Ser78 and Ser84 each carry phosphoserine. An RRM 2 domain is found at 104–177 (YRLIVENLSS…RKIRLVEDKP (74 aa)). Composition is skewed to basic residues over residues 179 to 206 (SRRR…KSRS) and 214 to 246 (SHSK…KKEK). The segment covering 247 to 256 (SRSPSKEKSR) has biased composition (basic and acidic residues). The span at 257 to 267 (SRSHSAGKSRS) shows a compositional bias: basic residues. Residues 268 to 278 (KSKDQAEEKIQ) are compositionally biased toward basic and acidic residues. Positions 286 to 302 (PKSRSPSRHKSKSKSRS) are enriched in basic residues. Residues Ser288, Ser290, and Ser292 each carry the phosphoserine modification. The segment covering 303–327 (RSQERRVEEEKRGSVSRGRSQEKSL) has biased composition (basic and acidic residues). Basic residues-rich tracts occupy residues 328 to 359 (RQSR…GRKR) and 367 to 382 (RSRS…KRGS). Residues 411–431 (VSKEREHAKSESSQREGRGES) are compositionally biased toward basic and acidic residues. Residues Ser431, Ser446, Ser456, Ser458, and Ser460 each carry the phosphoserine modification. Residues 449–460 (KSKPNLPSESRS) are compositionally biased toward low complexity. Over residues 461-494 (RSKSASKTRSRSKSRSRSASRSPSRSRSRSHSRS) the composition is skewed to basic residues.

It belongs to the splicing factor SR family. Found in a pre-mRNA splicing complex with SRSF4/SFRS4, SRSF5/SFRS5, SNRNP70, SNRPA1, SRRM1 and SRRM2. Interacts with PNN. In terms of processing, extensively phosphorylated on serine residues in the RS domain.

The protein localises to the nucleus speckle. In terms of biological role, plays a role in alternative splice site selection during pre-mRNA splicing. Represses the splicing of MAPT/Tau exon 10. This is Serine/arginine-rich splicing factor 4 (SRSF4) from Homo sapiens (Human).